Here is a 263-residue protein sequence, read N- to C-terminus: Trem-like transcript 4 protein (263 aa).

The signal sequence occupies residues 1-28 (MAWRYSQLLLVPVQLVFLASVCCPGVWG). The region spanning 29 to 132 (STVSEELHRM…LREVTVLRNI (104 aa)) is the Ig-like V-type domain. At 29 to 200 (STVSEELHRM…GWTSPGLLVS (172 aa)) the chain is on the extracellular side. Cysteine 47 and cysteine 116 are disulfide-bonded. Residue asparagine 100 is glycosylated (N-linked (GlcNAc...) asparagine). The interval 168 to 191 (SPEETTDSSINGTGHRNQSSSSPG) is disordered. Residues 201-221 (VQYGLLLLKALMLSVFCVLLC) form a helical membrane-spanning segment. Over 222-263 (WRSGQGREYMAETMELSKLPHISKSLDTVSHISGYEKKANWY) the chain is Cytoplasmic.

Interacts with TYROBP/DAP12. As to expression, predominantly expressed in spleen, with highest levels on selected populations of macrophages, including red pulp macrophages, and on subsets of dendritic cells (DC), mostly on CD8alpha(+) DC (at protein level). Also expressed on blood and spleen Ly6C(low) monocytes (at protein level). Not expressed on lymphocytes or granulocytes (at protein level).

The protein localises to the cell membrane. Positively regulates Toll-like receptor signaling via TLR7, TLR9 and TLR13 in neutrophils and splenic macrophages. Regulates TLR7 signaling by controlling ligand-induced recruitment of TLR7 from the endoplasmic reticulum to endosomes and lysosomes. Positively regulates Toll-like receptor TLR9-induced production of inflammatory cytokines but is dispensable for IFNB1 production. Involved in the anti-viral response to several viruses including influenza virus, vesicular stomatitis virus and cytomegalovirus. Binds to late apoptotic, and necrotic cells, but not living or early apoptotic cells, but is not essential for uptake of dying cells by dendritic cells (DCs). Does not bind nucleic acids. May participate in antigen presentation. This Mus musculus (Mouse) protein is Trem-like transcript 4 protein (Treml4).